Here is a 581-residue protein sequence, read N- to C-terminus: Aspartate--tRNA ligase (581 aa).

Glu-170 serves as a coordination point for L-aspartate. The tract at residues Gln-194–Lys-197 is aspartate. An L-aspartate-binding site is contributed by Arg-216. ATP-binding positions include Arg-216 to Glu-218 and Gln-225. His-439 lines the L-aspartate pocket. Glu-468 contributes to the ATP binding site. Arg-475 is a binding site for L-aspartate. Gly-520–Arg-523 provides a ligand contact to ATP.

Belongs to the class-II aminoacyl-tRNA synthetase family. Type 1 subfamily. Homodimer.

The protein localises to the cytoplasm. The catalysed reaction is tRNA(Asp) + L-aspartate + ATP = L-aspartyl-tRNA(Asp) + AMP + diphosphate. Functionally, catalyzes the attachment of L-aspartate to tRNA(Asp) in a two-step reaction: L-aspartate is first activated by ATP to form Asp-AMP and then transferred to the acceptor end of tRNA(Asp). This Thermosipho melanesiensis (strain DSM 12029 / CIP 104789 / BI429) protein is Aspartate--tRNA ligase.